The chain runs to 119 residues: Large ribosomal subunit protein bL17 (119 aa).

It belongs to the bacterial ribosomal protein bL17 family. Part of the 50S ribosomal subunit. Contacts protein L32.

This chain is Large ribosomal subunit protein bL17, found in Malacoplasma penetrans (strain HF-2) (Mycoplasma penetrans).